Consider the following 175-residue polypeptide: RNA pyrophosphohydrolase (175 aa).

The 144-residue stretch at 6-149 (GYRPNVGIVI…KRDVYRRVMK (144 aa)) folds into the Nudix hydrolase domain. Positions 38–59 (GGINPGETAEQAMYRELFEEVG) match the Nudix box motif.

It belongs to the Nudix hydrolase family. RppH subfamily. The cofactor is a divalent metal cation.

In terms of biological role, accelerates the degradation of transcripts by removing pyrophosphate from the 5'-end of triphosphorylated RNA, leading to a more labile monophosphorylated state that can stimulate subsequent ribonuclease cleavage. In Erwinia tasmaniensis (strain DSM 17950 / CFBP 7177 / CIP 109463 / NCPPB 4357 / Et1/99), this protein is RNA pyrophosphohydrolase.